A 1427-amino-acid chain; its full sequence is ATP-binding cassette transporter abc1 (1427 aa).

Residues 26-46 traverse the membrane as a helical segment; that stretch reads LLLFYLSLFSLTNLFLIQKLF. A glycan (N-linked (GlcNAc...) asparagine) is linked at N49. 9 consecutive transmembrane segments (helical) span residues 63 to 83, 87 to 107, 115 to 135, 155 to 175, 197 to 217, 262 to 282, 298 to 318, 345 to 367, and 397 to 417; these read CLLEYIQIILSIVSAALSFYL, AVWWAIRTITHLEIVGLNILS, LFSWISVANAFGLLLLRLISI, LLLPLAYNITLFLLVIIPLFF, CSIFSLIFTYGWLNGIIWKSW, ILLMVFLSVLVSSTLFVTPLA, GNSPFLWVFVLLIGPYLASVV, VLTSKTLFVAVDGSKINLDYVYN, and MYFLYQLLGWSAYVGLLLAIL. The ABC transmembrane type-1 1 domain maps to 262–549; sequence ILLMVFLSVL…LASVSRQFIQ (288 aa). N-linked (GlcNAc...) asparagine glycosylation is present at N437. Helical transmembrane passes span 489–509 and 513–533; these read IIFKSGMKIAPFISMFITFAI and IMGHQLTPATAFTSISMFGLL. 3 N-linked (GlcNAc...) asparagine glycosylation sites follow: N567, N581, and N601. The ABC transporter 1 domain maps to 579 to 807; sequence FENTSLSWSP…PSTFFSSNTK (229 aa). A helical membrane pass occupies residues 609–629; sequence FTLVVGSTGSGKSTLAMALLG. Residue 614–621 participates in ATP binding; that stretch reads GSTGSGKS. 2 N-linked (GlcNAc...) asparagine glycosylation sites follow: N658 and N703. The helical transmembrane segment at 760–780 threads the bilayer; the sequence is IILFTHNVSLCLPIAENVIVL. 2 N-linked (GlcNAc...) asparagine glycosylation sites follow: N782 and N842. Residues 862-1142 enclose the ABC transmembrane type-1 2 domain; sequence ILGSILLVMM…FVRANNEILT (281 aa). 3 helical membrane-spanning segments follow: residues 866-886, 896-916, and 973-993; these read ILLVMMSQVSLASIHFWIALW, LPSSFSFLWGYAILLFIYFLM, and LLWASLEGMLLCVMAILITML. N994 carries N-linked (GlcNAc...) asparagine glycosylation. Transmembrane regions (helical) follow at residues 995–1015, 1086–1106, and 1114–1134; these read VTLVMPIFMVPAAFVSLLVYL, LAIRTDGISGLVGFSTGLIAL, and GLVGFSLNSAIGFNISVLVFV. N1161 and N1184 each carry an N-linked (GlcNAc...) asparagine glycan. The ABC transporter 2 domain occupies 1180 to 1422; it reads VSIKNLTVSY…RRAFWKMCKE (243 aa). An ATP-binding site is contributed by 1214–1221; the sequence is GRTGSGKS. A helical membrane pass occupies residues 1223–1243; that stretch reads MGLTLLRFTMIMSGAVEVDGI. The N-linked (GlcNAc...) asparagine glycan is linked to N1324.

Belongs to the ABC transporter superfamily. ABCC family. Conjugate transporter (TC 3.A.1.208) subfamily.

It localises to the membrane. The chain is ATP-binding cassette transporter abc1 (abc1) from Schizosaccharomyces pombe (strain 972 / ATCC 24843) (Fission yeast).